A 211-amino-acid chain; its full sequence is Arginine exporter protein ArgO (211 aa).

6 consecutive transmembrane segments (helical) span residues 1–21, 37–57, 68–88, 111–131, 147–167, and 179–199; these read MFTYYFQGLALGAAMILPLGP, LMIALLCAVSDLLLICAGIFG, LLALVTWGGVAFLLCYGFGAL, IIITMLAVTWLNPHVYLDTFV, WFALGTISASFLWFFGLALLA, and AQRIINIVVGAVMWFIAFQLA.

It belongs to the LysE/ArgO transporter (TC 2.A.75) family.

It is found in the cell inner membrane. The catalysed reaction is L-arginine(in) = L-arginine(out). Involved in the export of arginine. Important to control the intracellular level of arginine and the correct balance between arginine and lysine. The polypeptide is Arginine exporter protein ArgO (Klebsiella pneumoniae subsp. pneumoniae (strain ATCC 700721 / MGH 78578)).